The chain runs to 160 residues: Glyoxalase domain-containing protein 5 (160 aa).

A VOC domain is found at 33-153 (RLDHLVLTVR…DHNLIEVSNY (121 aa)).

This sequence belongs to the glyoxalase I family.

The sequence is that of Glyoxalase domain-containing protein 5 (glod5) from Xenopus laevis (African clawed frog).